The primary structure comprises 352 residues: ATP synthase subunit a 2 (352 aa).

A signal peptide spans 1 to 26 (MRKKAISRILALVVPVLLSLNSQAFA). Transmembrane regions (helical) follow at residues 112 to 132 (VVMI…AGAS), 172 to 192 (FLPY…LGLI), 195 to 215 (GATA…TFVI), 232 to 252 (HLTA…EILG), 264 to 284 (LFAN…ISFI), 289 to 309 (IVAV…ELFV), and 310 to 330 (AFLQ…LATA).

Belongs to the ATPase A chain family. In terms of assembly, F-type ATPases have 2 components, CF(1) - the catalytic core - and CF(0) - the membrane proton channel. CF(1) has five subunits: alpha(3), beta(3), gamma(1), delta(1), epsilon(1). CF(0) has four main subunits: a, b, b' and c.

It localises to the cell inner membrane. Its function is as follows. Key component of the proton channel; it plays a direct role in the translocation of protons across the membrane. In Chlorobaculum tepidum (strain ATCC 49652 / DSM 12025 / NBRC 103806 / TLS) (Chlorobium tepidum), this protein is ATP synthase subunit a 2.